We begin with the raw amino-acid sequence, 373 residues long: Queuine tRNA-ribosyltransferase (373 aa).

The Proton acceptor role is filled by Asp-91. Substrate-binding positions include 91–95, Asp-145, Gln-187, and Gly-214; that span reads DSGGF. The segment at 245–251 is RNA binding; sequence GVGKPED. Asp-264 acts as the Nucleophile in catalysis. The interval 269–273 is RNA binding; important for wobble base 34 recognition; the sequence is TRNAR. Zn(2+)-binding residues include Cys-302, Cys-304, Cys-307, and His-333.

Belongs to the queuine tRNA-ribosyltransferase family. Homodimer. Within each dimer, one monomer is responsible for RNA recognition and catalysis, while the other monomer binds to the replacement base PreQ1. Requires Zn(2+) as cofactor.

It catalyses the reaction 7-aminomethyl-7-carbaguanine + guanosine(34) in tRNA = 7-aminomethyl-7-carbaguanosine(34) in tRNA + guanine. It functions in the pathway tRNA modification; tRNA-queuosine biosynthesis. Functionally, catalyzes the base-exchange of a guanine (G) residue with the queuine precursor 7-aminomethyl-7-deazaguanine (PreQ1) at position 34 (anticodon wobble position) in tRNAs with GU(N) anticodons (tRNA-Asp, -Asn, -His and -Tyr). Catalysis occurs through a double-displacement mechanism. The nucleophile active site attacks the C1' of nucleotide 34 to detach the guanine base from the RNA, forming a covalent enzyme-RNA intermediate. The proton acceptor active site deprotonates the incoming PreQ1, allowing a nucleophilic attack on the C1' of the ribose to form the product. After dissociation, two additional enzymatic reactions on the tRNA convert PreQ1 to queuine (Q), resulting in the hypermodified nucleoside queuosine (7-(((4,5-cis-dihydroxy-2-cyclopenten-1-yl)amino)methyl)-7-deazaguanosine). The protein is Queuine tRNA-ribosyltransferase of Idiomarina loihiensis (strain ATCC BAA-735 / DSM 15497 / L2-TR).